Here is a 669-residue protein sequence, read N- to C-terminus: DNA ligase (669 aa).

NAD(+) is bound by residues 34 to 38 (DAEYD), 83 to 84 (SL), and Glu-114. Residue Lys-116 is the N6-AMP-lysine intermediate of the active site. Residues Arg-137, Glu-171, Lys-287, and Lys-311 each coordinate NAD(+). Cys-405, Cys-408, Cys-423, and Cys-428 together coordinate Zn(2+). Residues 591–669 (NVESYFAGKT…EERFLQELNK (79 aa)) form the BRCT domain.

It belongs to the NAD-dependent DNA ligase family. LigA subfamily. Requires Mg(2+) as cofactor. Mn(2+) is required as a cofactor.

It catalyses the reaction NAD(+) + (deoxyribonucleotide)n-3'-hydroxyl + 5'-phospho-(deoxyribonucleotide)m = (deoxyribonucleotide)n+m + AMP + beta-nicotinamide D-nucleotide.. Its function is as follows. DNA ligase that catalyzes the formation of phosphodiester linkages between 5'-phosphoryl and 3'-hydroxyl groups in double-stranded DNA using NAD as a coenzyme and as the energy source for the reaction. It is essential for DNA replication and repair of damaged DNA. This Bacillus cereus (strain 03BB102) protein is DNA ligase.